The sequence spans 52 residues: Protein RepA (52 aa).

Residues 20–40 (KLEELAQKYGMTKSGLVNFLV) constitute a DNA-binding region (H-T-H motif).

The protein belongs to the transcriptional regulatory CopG/NikR family. As to quaternary structure, homodimer.

Functionally, regulates the plasmid copy number. RepA binds to the repAB promoter thus controlling the synthesis of the plasmid replication initiator protein RepB. The chain is Protein RepA (repA) from Lactiplantibacillus plantarum (Lactobacillus plantarum).